The sequence spans 160 residues: F-box protein At1g15015 (160 aa).

The region spanning 1–44 (MDVTLPHHVVEDILERLPVKTLRKFKCVCSTWRSTIDSQRFKDR) is the F-box domain.

This chain is F-box protein At1g15015, found in Arabidopsis thaliana (Mouse-ear cress).